We begin with the raw amino-acid sequence, 70 residues long: Potassium channel toxin kappa-KTx 2.5 (70 aa).

The N-terminal stretch at 1–26 is a signal peptide; sequence MESSRKSYVLMLFLAFVIMNVCSVSG. Positions 27 to 42 are excised as a propeptide; sequence EPKDGEIAGFEMEEAR. Cystine bridges form between Cys-46–Cys-64 and Cys-50–Cys-60.

This sequence belongs to the short scorpion toxin superfamily. Potassium channel inhibitor kappa-KTx family. Kappa-KTx 2 subfamily. As to expression, expressed by the venom gland.

It localises to the secreted. In terms of biological role, voltage-independently blocks potassium currents on hKv1.1/KCNA1 (IC(50)=217 uM), and hKv1.4/KCNA4 (IC(50)=71 uM) (expressed in CHO cells). This Opisthacanthus cayaporum (South American scorpion) protein is Potassium channel toxin kappa-KTx 2.5.